The chain runs to 524 residues: Beta-glucosidase 22 (524 aa).

The first 24 residues, 1–24, serve as a signal peptide directing secretion; it reads MALQKFPLLGLLFLITIVVSSTIA. Residue Q55 coordinates a beta-D-glucoside. A glycan (N-linked (GlcNAc...) asparagine) is linked at N61. A beta-D-glucoside contacts are provided by residues H158 and 203–204; that span reads NE. Residue E204 is the Proton donor of the active site. A disulfide bridge connects residues C223 and C230. A beta-D-glucoside is bound by residues Y346, E418, W468, 475–476, and F484; that span reads EW. E418 acts as the Nucleophile in catalysis. A glycan (N-linked (GlcNAc...) asparagine) is linked at N494. The Prevents secretion from ER signature appears at 521 to 524; the sequence is KDEL.

Belongs to the glycosyl hydrolase 1 family. Component of the PYK10 complex, at least composed of PYK10/BGLU23, BGLU21, BGLU22, JAL22, JAL23, PBP1/JAL30, PBP2/JAL31, JAL32, JAL33, JAL34, JAL35, GLL22 and GLL23. As to expression, expressed exclusively in roots.

The protein localises to the endoplasmic reticulum lumen. The catalysed reaction is Hydrolysis of terminal, non-reducing beta-D-glucosyl residues with release of beta-D-glucose.. Activated upon binding to PBP1 or PBP2. Functionally, beta-D-glucosidase active on scopolin &gt;&gt; esculin &gt;&gt; 4-MU-glucoside. No activity with DIMBOA-glucoside, pNP-glucoside, oNP-glucoside and sinigrin as substrates. This Arabidopsis thaliana (Mouse-ear cress) protein is Beta-glucosidase 22.